The primary structure comprises 450 residues: UDP-N-acetylmuramoylalanine--D-glutamate ligase (450 aa).

ATP is bound at residue 119–125; sequence GSNGKTT.

The protein belongs to the MurCDEF family.

The protein resides in the cytoplasm. The enzyme catalyses UDP-N-acetyl-alpha-D-muramoyl-L-alanine + D-glutamate + ATP = UDP-N-acetyl-alpha-D-muramoyl-L-alanyl-D-glutamate + ADP + phosphate + H(+). Its pathway is cell wall biogenesis; peptidoglycan biosynthesis. In terms of biological role, cell wall formation. Catalyzes the addition of glutamate to the nucleotide precursor UDP-N-acetylmuramoyl-L-alanine (UMA). The polypeptide is UDP-N-acetylmuramoylalanine--D-glutamate ligase (Streptococcus pneumoniae (strain ATCC BAA-255 / R6)).